Here is a 179-residue protein sequence, read N- to C-terminus: UPF0134 protein MPN_145 (179 aa).

Belongs to the UPF0134 family.

In Mycoplasma pneumoniae (strain ATCC 29342 / M129 / Subtype 1) (Mycoplasmoides pneumoniae), this protein is UPF0134 protein MPN_145.